We begin with the raw amino-acid sequence, 786 residues long: Calcium-independent phospholipase A2-gamma (786 aa).

N4 is a glycosylation site (N-linked (GlcNAc...) asparagine). Disordered stretches follow at residues 158–180, 225–285, and 321–348; these read KKYS…IIDK, KENS…SLPI, and SKSQ…EEKK. Over residues 225–245 the composition is skewed to basic and acidic residues; it reads KENSHFQEKSELEGKKVEEGK. 2 stretches are compositionally biased toward polar residues: residues 246–258 and 266–285; these read SSSL…TSQA and SAGT…SLPI. The 196-residue stretch at 449–644 folds into the PNPLA domain; the sequence is LTIDGGGTRG…LLNNPSALAM (196 aa). The GXGXXG motif lies at 453 to 458; it reads GGGTRG. Residues 483–503 traverse the membrane as a helical segment; sequence ICGVSTGAILAFMLGLFHLPL. Residues 485–489 carry the GXSXG motif; it reads GVSTG. S487 functions as the Nucleophile in the catalytic mechanism. The active-site Proton acceptor is the D631. Positions 631–633 match the DGA/G motif; that stretch reads DGG. Residue K740 is modified to N6-succinyllysine.

Expressed in kidney, heart and brain.

It localises to the endoplasmic reticulum membrane. The protein localises to the mitochondrion membrane. It is found in the peroxisome membrane. It carries out the reaction a 1,2-diacyl-sn-glycero-3-phosphocholine + H2O = a 1-acyl-sn-glycero-3-phosphocholine + a fatty acid + H(+). The enzyme catalyses a 1,2-diacyl-sn-glycero-3-phosphocholine + H2O = a 2-acyl-sn-glycero-3-phosphocholine + a fatty acid + H(+). It catalyses the reaction a 1,2-diacyl-sn-glycero-3-phosphoethanolamine + H2O = a 1-acyl-sn-glycero-3-phosphoethanolamine + a fatty acid + H(+). The catalysed reaction is a 1-O-(1Z-alkenyl)-2-acyl-sn-glycero-3-phosphocholine + H2O = a 1-O-(1Z-alkenyl)-sn-glycero-3-phosphocholine + a fatty acid + H(+). It carries out the reaction a 1-acyl-sn-glycero-3-phosphocholine + H2O = sn-glycerol 3-phosphocholine + a fatty acid + H(+). The enzyme catalyses 1-acyl-2-(9Z,12Z)-octadecadienoyl-sn-glycero-3-phosphocholine + H2O = a 1-acyl-sn-glycero-3-phosphocholine + (9Z,12Z)-octadecadienoate + H(+). It catalyses the reaction 1-acyl-2-(5Z,8Z,11Z,14Z-eicosatetraenoyl)-sn-glycero-3-phosphocholine + H2O = a 1-acyl-sn-glycero-3-phosphocholine + (5Z,8Z,11Z,14Z)-eicosatetraenoate + H(+). The catalysed reaction is 1-hexadecanoyl-2-(5Z,8Z,11Z,14Z-eicosatetraenoyl)-sn-glycero-3-phosphocholine + H2O = 1-hexadecanoyl-sn-glycero-3-phosphocholine + (5Z,8Z,11Z,14Z)-eicosatetraenoate + H(+). It carries out the reaction 1-octadecanoyl-2-(9Z-octadecenoyl)-sn-glycero-3-phosphocholine + H2O = 1-octadecanoyl-sn-glycero-3-phosphocholine + (9Z)-octadecenoate + H(+). The enzyme catalyses 1-hexadecanoyl-2-(9Z-octadecenoyl)-sn-glycero-3-phosphocholine + H2O = 1-hexadecanoyl-sn-glycero-3-phosphocholine + (9Z)-octadecenoate + H(+). It catalyses the reaction 1-hexadecanoyl-2-(9Z,12Z-octadecadienoyl)-sn-glycero-3-phosphocholine + H2O = (9Z,12Z)-octadecadienoate + 1-hexadecanoyl-sn-glycero-3-phosphocholine + H(+). The catalysed reaction is 1-acyl-2-(9Z,12Z)-octadecadienoyl-sn-glycero-3-phosphoethanolamine + H2O = a 1-acyl-sn-glycero-3-phosphoethanolamine + (9Z,12Z)-octadecadienoate + H(+). It carries out the reaction 1-acyl-2-(5Z,8Z,11Z,14Z)-eicosatetraenoyl-sn-glycero-3-phosphoethanolamine + H2O = a 1-acyl-sn-glycero-3-phosphoethanolamine + (5Z,8Z,11Z,14Z)-eicosatetraenoate + H(+). The enzyme catalyses 1-hexadecanoyl-2-(5Z,8Z,11Z,14Z-eicosatetraenoyl)-sn-glycero-3-phosphoethanolamine + H2O = 1-hexadecanoyl-sn-glycero-3-phosphoethanolamine + (5Z,8Z,11Z,14Z)-eicosatetraenoate + H(+). It catalyses the reaction 1-hexadecanoyl-2-(5Z,8Z,11Z,14Z-eicosatetraenoyl)-sn-glycero-3-phosphocholine + H2O = 2-(5Z,8Z,11Z,14Z)-eicosatetraenoyl-sn-glycero-3-phosphocholine + hexadecanoate + H(+). The catalysed reaction is 1-octadecanoyl-2-(9Z-octadecenoyl)-sn-glycero-3-phosphocholine + H2O = 2-(9Z-octadecenoyl)-sn-glycero-3-phosphocholine + octadecanoate + H(+). It carries out the reaction 1-hexadecanoyl-2-(4Z,7Z,10Z,13Z,16Z,19Z-docosahexaenoyl)-sn-glycero-3-phosphocholine + H2O = 2-(4Z,7Z,10Z,13Z,16Z,19Z-docosahexaenoyl)-sn-glycero-3-phosphocholine + hexadecanoate + H(+). The enzyme catalyses 1-O-(1Z)-hexadecenyl-2 (5Z,8Z,11Z,14Z)-eicosatetraenoyl-sn-glycero-3-phosphocholine + H2O = 1-(1Z-hexadecenyl)-sn-glycero-3-phosphocholine + (5Z,8Z,11Z,14Z)-eicosatetraenoate + H(+). It catalyses the reaction 1-O-(1Z-hexadecenyl)-2-(9Z-octadecenoyl)-sn-glycero-3-phosphocholine + H2O = 1-(1Z-hexadecenyl)-sn-glycero-3-phosphocholine + (9Z)-octadecenoate + H(+). The catalysed reaction is 1-hexadecanoyl-sn-glycero-3-phosphocholine + H2O = sn-glycerol 3-phosphocholine + hexadecanoate + H(+). It carries out the reaction 1',3'-bis-[1,2-di-(9Z,12Z-octadecadienoyl)-sn-glycero-3-phospho]-glycerol + H2O = 1'-[1,2-di-(9Z,12Z-octadecadienoyl)-sn-glycero-3-phospho]-3'-[1-(9Z,12Z-octadecadienoyl)-sn-glycero-3-phospho]-glycerol + (9Z,12Z)-octadecadienoate + H(+). The enzyme catalyses 1'-[1-acyl-2-(9-hydroxy-(10E,12Z)-octadecadienoyl)-sn-glycero-3-phospho]-3'-[1,2-diacyl-sn-glycero-3-phospho]-glycerol + H2O = 9-hydroxy-(10E,12Z)-octadecadienoate + 1'-[1,2-diacyl-sn-glycero-3-phospho],3'-[1-acyl-sn-glycero-3-phospho]-glycerol + H(+). It participates in phospholipid metabolism. Calcium-independent phospholipase. Functionally, calcium-independent and membrane-bound phospholipase, that catalyzes the esterolytic cleavage of fatty acids from glycerophospholipids to yield free fatty acids and lysophospholipids, hence regulating membrane physical properties and the release of lipid second messengers and growth factors. Hydrolyzes phosphatidylethanolamine, phosphatidylcholine and probably phosphatidylinositol with a possible preference for the former. Has also a broad substrate specificity in terms of fatty acid moieties, hydrolyzing saturated and mono-unsaturated fatty acids at nearly equal rates from either the sn-1 or sn-2 position in diacyl phosphatidylcholine. However, has a weak activity toward polyunsaturated fatty acids at the sn-2 position, and thereby favors the production of 2-arachidonoyl lysophosphatidylcholine, a key branch point metabolite in eicosanoid signaling. On the other hand, can produce arachidonic acid from the sn-1 position of diacyl phospholipid and from the sn-2 position of arachidonate-containing plasmalogen substrates. Therefore, plays an important role in the mobilization of arachidonic acid in response to cellular stimuli and the generation of lipid second messengers. Can also hydrolyze lysophosphatidylcholine. In the mitochondrial compartment, catalyzes the hydrolysis and release of oxidized aliphatic chains from cardiolipin and integrates mitochondrial bioenergetics and signaling. It is essential for maintaining efficient bioenergetic mitochondrial function through tailoring mitochondrial membrane lipid metabolism and composition. This chain is Calcium-independent phospholipase A2-gamma, found in Oryctolagus cuniculus (Rabbit).